Here is a 521-residue protein sequence, read N- to C-terminus: CD166 antigen (521 aa).

The Extracellular segment spans residues 1–465 (GSPVFIAFRS…NREQVNHRAT (465 aa)). Residues Asn33, Asn105, Asn244, Asn299, Asn395, Asn418, and Asn437 are each glycosylated (N-linked (GlcNAc...) asparagine). The Ig-like V-type 2 domain maps to 63-172 (PTIVKVFKQP…YGPSGQKTVQ (110 aa)). Cystine bridges form between Cys95/Cys158, Cys208/Cys251, Cys292/Cys330, and Cys373/Cys423. Ig-like C2-type domains lie at 183-266 (PTEQ…TAIT), 271-347 (DLSL…ESLT), and 354-439 (PQIK…LNVS). Residues 466-487 (LIVGIVLRLLHGALVAGVVYWL) form a helical membrane-spanning segment. Topologically, residues 488–521 (YVKKSKTASKHVNKDLGNLEENKKLEQNNHRTEA) are cytoplasmic. Positions 500–521 (NKDLGNLEENKKLEQNNHRTEA) are disordered. Residues 507-521 (EENKKLEQNNHRTEA) are compositionally biased toward basic and acidic residues.

Homodimer. Interacts (via extracellular domain) with CD6 (via extracellular domain). Homodimerization and interaction with CD6 involve the same region and cannot occur simultaneously. The affinity for CD6 is much higher than the affinity for self-association. Interacts (via glycosylated extracellular domain) with LGALS1 and LGALS3. Interaction with LGALS1 or LGALS3 inhibits interaction with CD6. Glycosylated.

The protein localises to the cell membrane. Its subcellular location is the cell projection. The protein resides in the axon. It localises to the dendrite. Functionally, cell adhesion molecule that mediates both heterotypic cell-cell contacts via its interaction with CD6, as well as homotypic cell-cell contacts. Promotes T-cell activation and proliferation via its interactions with CD6. Contributes to the formation and maturation of the immunological synapse via its interactions with CD6. Mediates homotypic interactions with cells that express ALCAM. Mediates attachment of dendritic cells onto endothelial cells via homotypic interaction. Inhibits endothelial cell migration and promotes endothelial tube formation via homotypic interactions. Required for normal organization of the lymph vessel network. Required for normal hematopoietic stem cell engraftment in the bone marrow. Plays a role in hematopoiesis; required for normal numbers of hematopoietic stem cells in bone marrow. Promotes in vitro osteoblast proliferation and differentiation. Promotes neurite extension, axon growth and axon guidance; axons grow preferentially on surfaces that contain ALCAM. Mediates outgrowth and pathfinding for retinal ganglion cell axons. The polypeptide is CD166 antigen (ALCAM) (Canis lupus familiaris (Dog)).